The sequence spans 660 residues: DNA ligase (660 aa).

Residues 33–37, 82–83, and E110 contribute to the NAD(+) site; these read DFVYD and SL. K112 (N6-AMP-lysine intermediate) is an active-site residue. NAD(+) is bound by residues R133, E167, K281, and K305. Zn(2+) contacts are provided by C396, C399, C412, and C417. The BRCT domain occupies 583 to 660; that stretch reads DENKLLVGKK…SFEDIKSYLD (78 aa).

This sequence belongs to the NAD-dependent DNA ligase family. LigA subfamily. The cofactor is Mg(2+). Mn(2+) serves as cofactor.

The catalysed reaction is NAD(+) + (deoxyribonucleotide)n-3'-hydroxyl + 5'-phospho-(deoxyribonucleotide)m = (deoxyribonucleotide)n+m + AMP + beta-nicotinamide D-nucleotide.. Functionally, DNA ligase that catalyzes the formation of phosphodiester linkages between 5'-phosphoryl and 3'-hydroxyl groups in double-stranded DNA using NAD as a coenzyme and as the energy source for the reaction. It is essential for DNA replication and repair of damaged DNA. The polypeptide is DNA ligase (Borreliella afzelii (strain PKo) (Borrelia afzelii)).